The following is a 236-amino-acid chain: Eukaryotic translation initiation factor 3 subunit J (236 aa).

The tract at residues 1-86 is disordered; sequence MADDWESAAD…KEEEEQKRLA (86 aa). Residues 28 to 46 show a composition bias toward acidic residues; that stretch reads GEDDDEDVKESWEDEEEKK. Composition is skewed to basic and acidic residues over residues 47 to 58 and 68 to 86; these read DEEKPTKTEAPV and AKLEEQERLKEEEEQKRLA. The stretch at 61–115 forms a coiled coil; that stretch reads KPNKALKAKLEEQERLKEEEEQKRLAEMTPEEKLAEKLRLQKIQEESDLKSALET.

Belongs to the eIF-3 subunit J family. In terms of assembly, component of the eukaryotic translation initiation factor 3 (eIF-3) complex. The eIF-3 complex interacts with pix.

It is found in the cytoplasm. Functionally, component of the eukaryotic translation initiation factor 3 (eIF-3) complex, which is involved in protein synthesis of a specialized repertoire of mRNAs and, together with other initiation factors, stimulates binding of mRNA and methionyl-tRNAi to the 40S ribosome. The eIF-3 complex specifically targets and initiates translation of a subset of mRNAs involved in cell proliferation. This is Eukaryotic translation initiation factor 3 subunit J from Drosophila mojavensis (Fruit fly).